A 612-amino-acid chain; its full sequence is Alpha-glycerophosphate oxidase (612 aa).

21 to 49 (DLLIIGGGITGAGVALQAAASGLDTGLIE) contributes to the FAD binding site. Residues 399-408 (ETSTSEKELD) are compositionally biased toward basic and acidic residues. A disordered region spans residues 399–418 (ETSTSEKELDPSAVSRGSSF).

This sequence belongs to the FAD-dependent glycerol-3-phosphate dehydrogenase family. FAD is required as a cofactor.

It localises to the cytoplasm. The catalysed reaction is sn-glycerol 3-phosphate + O2 = dihydroxyacetone phosphate + H2O2. This chain is Alpha-glycerophosphate oxidase (glpO), found in Streptococcus pyogenes serotype M6 (strain ATCC BAA-946 / MGAS10394).